We begin with the raw amino-acid sequence, 397 residues long: Phosphoglycerate kinase (397 aa).

Residues 22–24 (DLN), R37, 60–63 (HFGR), R119, and R152 contribute to the substrate site. ATP is bound by residues K202, E324, and 354-357 (GGDT).

Belongs to the phosphoglycerate kinase family. In terms of assembly, monomer.

It localises to the cytoplasm. The catalysed reaction is (2R)-3-phosphoglycerate + ATP = (2R)-3-phospho-glyceroyl phosphate + ADP. Its pathway is carbohydrate degradation; glycolysis; pyruvate from D-glyceraldehyde 3-phosphate: step 2/5. This chain is Phosphoglycerate kinase, found in Rhizorhabdus wittichii (strain DSM 6014 / CCUG 31198 / JCM 15750 / NBRC 105917 / EY 4224 / RW1) (Sphingomonas wittichii).